A 355-amino-acid polypeptide reads, in one-letter code: Alanine racemase (355 aa).

Catalysis depends on K34, which acts as the Proton acceptor; specific for D-alanine. An N6-(pyridoxal phosphate)lysine modification is found at K34. R133 lines the substrate pocket. Y249 (proton acceptor; specific for L-alanine) is an active-site residue. A substrate-binding site is contributed by M297.

This sequence belongs to the alanine racemase family. Pyridoxal 5'-phosphate is required as a cofactor.

It catalyses the reaction L-alanine = D-alanine. It participates in amino-acid biosynthesis; D-alanine biosynthesis; D-alanine from L-alanine: step 1/1. In terms of biological role, catalyzes the interconversion of L-alanine and D-alanine. May also act on other amino acids. The sequence is that of Alanine racemase (alr) from Rickettsia rickettsii (strain Sheila Smith).